Reading from the N-terminus, the 300-residue chain is 4-hydroxy-tetrahydrodipicolinate synthase (300 aa).

Thr-45 is a binding site for pyruvate. Tyr-140 (proton donor/acceptor) is an active-site residue. Lys-169 serves as the catalytic Schiff-base intermediate with substrate. Ile-210 contacts pyruvate.

This sequence belongs to the DapA family. Homotetramer; dimer of dimers.

The protein localises to the cytoplasm. The enzyme catalyses L-aspartate 4-semialdehyde + pyruvate = (2S,4S)-4-hydroxy-2,3,4,5-tetrahydrodipicolinate + H2O + H(+). The protein operates within amino-acid biosynthesis; L-lysine biosynthesis via DAP pathway; (S)-tetrahydrodipicolinate from L-aspartate: step 3/4. Its function is as follows. Catalyzes the condensation of (S)-aspartate-beta-semialdehyde [(S)-ASA] and pyruvate to 4-hydroxy-tetrahydrodipicolinate (HTPA). The sequence is that of 4-hydroxy-tetrahydrodipicolinate synthase from Helicobacter pylori (strain G27).